The primary structure comprises 125 residues: Large ribosomal subunit protein uL22 (125 aa).

It belongs to the universal ribosomal protein uL22 family. As to quaternary structure, part of the 50S ribosomal subunit.

This protein binds specifically to 23S rRNA; its binding is stimulated by other ribosomal proteins, e.g. L4, L17, and L20. It is important during the early stages of 50S assembly. It makes multiple contacts with different domains of the 23S rRNA in the assembled 50S subunit and ribosome. Its function is as follows. The globular domain of the protein is located near the polypeptide exit tunnel on the outside of the subunit, while an extended beta-hairpin is found that lines the wall of the exit tunnel in the center of the 70S ribosome. The protein is Large ribosomal subunit protein uL22 of Novosphingobium aromaticivorans (strain ATCC 700278 / DSM 12444 / CCUG 56034 / CIP 105152 / NBRC 16084 / F199).